Reading from the N-terminus, the 245-residue chain is Type III pantothenate kinase (245 aa).

6–13 (DQGNTILK) serves as a coordination point for ATP. Residues Y86 and 93–96 (GTDR) each bind substrate. D95 serves as the catalytic Proton acceptor. Residue D116 participates in K(+) binding. T119 contributes to the ATP binding site. Position 171 (T171) interacts with substrate.

The protein belongs to the type III pantothenate kinase family. As to quaternary structure, homodimer. Requires NH4(+) as cofactor. It depends on K(+) as a cofactor.

The protein localises to the cytoplasm. It catalyses the reaction (R)-pantothenate + ATP = (R)-4'-phosphopantothenate + ADP + H(+). Its pathway is cofactor biosynthesis; coenzyme A biosynthesis; CoA from (R)-pantothenate: step 1/5. Catalyzes the phosphorylation of pantothenate (Pan), the first step in CoA biosynthesis. The polypeptide is Type III pantothenate kinase (Azobacteroides pseudotrichonymphae genomovar. CFP2).